The chain runs to 963 residues: Transcription factor cbf12 (963 aa).

2 disordered regions span residues 130 to 207 (NPSN…SQGL) and 248 to 289 (VNMN…PPQK). 2 stretches are compositionally biased toward polar residues: residues 143 to 207 (FENN…SQGL) and 249 to 289 (NMNS…PPQK).

This sequence belongs to the Su(H) family.

It is found in the nucleus. In terms of biological role, transcription factor which function may be to trigger the increase of adhesion at stationary phase, possibly by counteracting or replacing cbf11 at the respective promoters. May also play a cbf11-antagonistic role in the regulation of a number of other important processes such as extracellular material production, colony morphogenesis, ploidy maintenance, or meiosis. The protein is Transcription factor cbf12 (cbf12) of Schizosaccharomyces pombe (strain 972 / ATCC 24843) (Fission yeast).